Reading from the N-terminus, the 301-residue chain is Ornithine carbamoyltransferase (301 aa).

Residues 46–49 (STRT), Q73, R97, and 124–127 (HPCQ) contribute to the carbamoyl phosphate site. Residues N154, D218, and 222 to 223 (SM) each bind L-ornithine. Carbamoyl phosphate-binding positions include 258–259 (CL) and R286.

It belongs to the aspartate/ornithine carbamoyltransferase superfamily. OTCase family.

Its subcellular location is the cytoplasm. It carries out the reaction carbamoyl phosphate + L-ornithine = L-citrulline + phosphate + H(+). It participates in amino-acid biosynthesis; L-arginine biosynthesis; L-arginine from L-ornithine and carbamoyl phosphate: step 1/3. In terms of biological role, reversibly catalyzes the transfer of the carbamoyl group from carbamoyl phosphate (CP) to the N(epsilon) atom of ornithine (ORN) to produce L-citrulline. The sequence is that of Ornithine carbamoyltransferase (argF) from Methanothermobacter thermautotrophicus (strain ATCC 29096 / DSM 1053 / JCM 10044 / NBRC 100330 / Delta H) (Methanobacterium thermoautotrophicum).